A 101-amino-acid polypeptide reads, in one-letter code: Small ribosomal subunit protein uS14 (101 aa).

A disordered region spans residues 50–70 (SLPRDSSPSRQRKRCRQTGRP). Over residues 59–68 (RQRKRCRQTG) the composition is skewed to basic residues.

This sequence belongs to the universal ribosomal protein uS14 family. Part of the 30S ribosomal subunit. Contacts proteins S3 and S10.

Binds 16S rRNA, required for the assembly of 30S particles and may also be responsible for determining the conformation of the 16S rRNA at the A site. The chain is Small ribosomal subunit protein uS14 from Erwinia tasmaniensis (strain DSM 17950 / CFBP 7177 / CIP 109463 / NCPPB 4357 / Et1/99).